A 248-amino-acid chain; its full sequence is MTERLAGKTALVTGAAQGIGKAIAARLAADGATVIVSDINAEGAKAAAASIGKKARAIAADISDPGSVKALFAEIQALTGGIDILVNNASIVPFVAWDDVDLDHWRKIIDVNLTGTFIVTRAGTDQMRAAGKAGRVISIASNTFFAGTPNMAAYVAAKGGVIGFTRALATELGKYNITANAVTPGLIESDGVKASPHNEAFGFVEMLQAMKGKGQPEHIADVVSFLASDDARWITGQTLNVDAGMVRH.

11-35 (LVTGAAQGIGKAIAARLAADGATVI) serves as a coordination point for NAD(+). Ser141 is a substrate binding site. Residue Tyr154 is the Proton acceptor of the active site.

Belongs to the short-chain dehydrogenases/reductases (SDR) family. As to quaternary structure, homotetramer.

The enzyme catalyses pyridoxal + NAD(+) = 4-pyridoxolactone + NADH + H(+). The protein operates within cofactor degradation; B6 vitamer degradation; 4-pyridoxate from pyridoxal: step 1/2. Involved in the degradation of pyridoxine or pyridoxamine (free, phosphate-unbound, forms of vitamin B6). Oxidizes pyridoxal to 4-pyridoxolactone, but does not have activity toward pyridoxal 5'-phosphate, pyridoxine, pyridoxamine, pyridoxamine 5'-phosphate, 4-phthalaldehyde, 2-nitrobenzaldehyde, pyridine, formaldehyde, 2-carboxybenzaldehyde or sugars. This Mesorhizobium japonicum (strain LMG 29417 / CECT 9101 / MAFF 303099) (Mesorhizobium loti (strain MAFF 303099)) protein is Pyridoxal 4-dehydrogenase.